Consider the following 876-residue polypeptide: GRB2-associated and regulator of MAPK protein 1 (876 aa).

Residues 12–320 (KDVKWSSVAV…HLVKGESWPE (309 aa)) form a CABIT region. Phosphotyrosine occurs at positions 105 and 453. Residues 496-572 (IPGTLGAAVK…SPSPTLSYYS (77 aa)) are disordered. Residues 498 to 550 (GTLGAAVKSSDTALPPPPVPPKSEAVREECRLLNAPPVPPRSAKPLSTSPSIP) form a necessary for interaction with GRB2 region. Polar residues predominate over residues 558-572 (RQQTRSPSPTLSYYS). Residues serine 610 and serine 614 each carry the phosphoserine modification. 2 disordered regions span residues 626–664 (WPNH…PKRN) and 738–763 (ASET…PDLS). Composition is skewed to polar residues over residues 631 to 640 (SGASESQTRS) and 648 to 658 (RSYSYPRQKTP). One can recognise an SAM domain in the interval 811–876 (LSIEEVSKSL…QFINGWRPKI (66 aa)).

This sequence belongs to the GAREM family. Isoform 1 interacts with EGFR. Isoform 1 interacts (via proline-rich domain and phosphorylated at Tyr-105 and Tyr-453) with GRB2 (via SH3 domains); the interaction occurs upon EGF stimulation. Isoform 1 interacts (phosphorylated at Tyr-453) with PTPN11; the interaction increases MAPK/ERK activity and does not affect the GRB2/SOS complex formation. Isoform 2 does not interact with GRB2. In terms of processing, on EGF stimulation, phosphorylated on Tyr-105 and Tyr-453. In terms of tissue distribution, isoform 1 is ubiquitously expressed.

Its function is as follows. Acts as an adapter protein that plays a role in intracellular signaling cascades triggered either by the cell surface activated epidermal growth factor receptor and/or cytoplasmic protein tyrosine kinases. Promotes activation of the MAPK/ERK signaling pathway. Plays a role in the regulation of cell proliferation. In Homo sapiens (Human), this protein is GRB2-associated and regulator of MAPK protein 1 (GAREM1).